Here is a 243-residue protein sequence, read N- to C-terminus: UPF0246 protein SEQ_2141 (243 aa).

Belongs to the UPF0246 family.

The chain is UPF0246 protein SEQ_2141 from Streptococcus equi subsp. equi (strain 4047).